The sequence spans 357 residues: 4-hydroxy-3-methylbut-2-en-1-yl diphosphate synthase (flavodoxin) (357 aa).

Residues Cys264, Cys267, Cys299, and Glu306 each contribute to the [4Fe-4S] cluster site.

The protein belongs to the IspG family. The cofactor is [4Fe-4S] cluster.

It carries out the reaction (2E)-4-hydroxy-3-methylbut-2-enyl diphosphate + oxidized [flavodoxin] + H2O + 2 H(+) = 2-C-methyl-D-erythritol 2,4-cyclic diphosphate + reduced [flavodoxin]. It participates in isoprenoid biosynthesis; isopentenyl diphosphate biosynthesis via DXP pathway; isopentenyl diphosphate from 1-deoxy-D-xylulose 5-phosphate: step 5/6. Converts 2C-methyl-D-erythritol 2,4-cyclodiphosphate (ME-2,4cPP) into 1-hydroxy-2-methyl-2-(E)-butenyl 4-diphosphate. The polypeptide is 4-hydroxy-3-methylbut-2-en-1-yl diphosphate synthase (flavodoxin) (Campylobacter jejuni subsp. jejuni serotype O:23/36 (strain 81-176)).